Consider the following 260-residue polypeptide: Metallo-beta-lactamase domain-containing protein 1 (260 aa).

Residues H118, H120, D122, H123, H173, D196, and H235 each contribute to the Zn(2+) site.

The protein belongs to the metallo-beta-lactamase superfamily. Glyoxalase II family. As to quaternary structure, homodimer. Zn(2+) serves as cofactor.

Its subcellular location is the cytoplasm. It is found in the cytosol. The protein resides in the nucleus. It carries out the reaction a ribonucleotidyl-ribonucleotide-RNA + H2O = a 3'-end ribonucleotide-RNA + a 5'-end 5'-phospho-ribonucleoside-RNA + H(+). Functionally, endoribonuclease that catalyzes the hydrolysis of histone-coding pre-mRNA 3'-end. Involved in histone pre-mRNA processing during the S-phase of the cell cycle, which is required for entering/progressing through S-phase. Cleaves histone pre-mRNA at a major and a minor cleavage site after the 5'-ACCCA-3' and the 5'-ACCCACA-3' sequence, respectively, and located downstream of the stem-loop. May require the presence of the HDE element located at the histone pre-RNA 3'-end to avoid non-specific cleavage. In Mus musculus (Mouse), this protein is Metallo-beta-lactamase domain-containing protein 1.